The primary structure comprises 173 residues: Crossover junction endodeoxyribonuclease RuvC (173 aa).

Catalysis depends on residues Asp11, Glu71, and Asp143. Residues Asp11, Glu71, and Asp143 each contribute to the Mg(2+) site.

It belongs to the RuvC family. As to quaternary structure, homodimer which binds Holliday junction (HJ) DNA. The HJ becomes 2-fold symmetrical on binding to RuvC with unstacked arms; it has a different conformation from HJ DNA in complex with RuvA. In the full resolvosome a probable DNA-RuvA(4)-RuvB(12)-RuvC(2) complex forms which resolves the HJ. Mg(2+) serves as cofactor.

Its subcellular location is the cytoplasm. The catalysed reaction is Endonucleolytic cleavage at a junction such as a reciprocal single-stranded crossover between two homologous DNA duplexes (Holliday junction).. Functionally, the RuvA-RuvB-RuvC complex processes Holliday junction (HJ) DNA during genetic recombination and DNA repair. Endonuclease that resolves HJ intermediates. Cleaves cruciform DNA by making single-stranded nicks across the HJ at symmetrical positions within the homologous arms, yielding a 5'-phosphate and a 3'-hydroxyl group; requires a central core of homology in the junction. The consensus cleavage sequence is 5'-(A/T)TT(C/G)-3'. Cleavage occurs on the 3'-side of the TT dinucleotide at the point of strand exchange. HJ branch migration catalyzed by RuvA-RuvB allows RuvC to scan DNA until it finds its consensus sequence, where it cleaves and resolves the cruciform DNA. The polypeptide is Crossover junction endodeoxyribonuclease RuvC (Brucella abortus (strain 2308)).